A 123-amino-acid polypeptide reads, in one-letter code: Small ribosomal subunit protein uS12 (123 aa).

Asp-89 bears the 3-methylthioaspartic acid mark.

Belongs to the universal ribosomal protein uS12 family. Part of the 30S ribosomal subunit. Contacts proteins S8 and S17. May interact with IF1 in the 30S initiation complex.

With S4 and S5 plays an important role in translational accuracy. Its function is as follows. Interacts with and stabilizes bases of the 16S rRNA that are involved in tRNA selection in the A site and with the mRNA backbone. Located at the interface of the 30S and 50S subunits, it traverses the body of the 30S subunit contacting proteins on the other side and probably holding the rRNA structure together. The combined cluster of proteins S8, S12 and S17 appears to hold together the shoulder and platform of the 30S subunit. The protein is Small ribosomal subunit protein uS12 of Acidiphilium cryptum (strain JF-5).